A 28-amino-acid chain; its full sequence is Small spore coat assembly protein A (28 aa).

Residues 8 to 28 (GFALLVVLFILLIIVGAAYIY) traverse the membrane as a helical segment.

Belongs to the SscA family.

The protein localises to the spore coat. The protein resides in the membrane. In terms of biological role, spore protein involved in the assembly of several components of the spore coat, including CotB, CotG and CotH, and in spore germination. This Bacillus subtilis (strain 168) protein is Small spore coat assembly protein A.